We begin with the raw amino-acid sequence, 764 residues long: uncharacterized protein (764 aa).

This is an uncharacterized protein from Acanthamoeba polyphaga (Amoeba).